The chain runs to 117 residues: Ribosome-binding factor A (117 aa).

Belongs to the RbfA family. Monomer. Binds 30S ribosomal subunits, but not 50S ribosomal subunits or 70S ribosomes.

The protein localises to the cytoplasm. One of several proteins that assist in the late maturation steps of the functional core of the 30S ribosomal subunit. Associates with free 30S ribosomal subunits (but not with 30S subunits that are part of 70S ribosomes or polysomes). Required for efficient processing of 16S rRNA. May interact with the 5'-terminal helix region of 16S rRNA. This Blochmanniella floridana protein is Ribosome-binding factor A.